The chain runs to 404 residues: Protrudin (404 aa).

Residues 1 to 25 (MQSSDRDLSGPEASPSVMPEVLSEC) form a disordered region. Residues 1–63 (MQSSDRDLSG…LKDAGDGVRY (63 aa)) lie on the Cytoplasmic side of the membrane. Residues 1 to 92 (MQSSDRDLSG…LFLTLNEGAW (92 aa)) are sufficient for homooligomerization. A sufficient for localization to endoplasmic reticulum tubular network and for interactions with REEP1, REEP5, ATL1, ATL2, ATL3 and SPAST region spans residues 1-205 (MQSSDRDLSG…LYLLPLCWVL (205 aa)). Positions 51 to 64 (LEPLKDAGDGVRYL) are necessary for interaction with RAB11A and function in neurite outgrowth. Residues 64-85 (LLRWQMPLCSLLTCLGLNILFL) traverse the membrane as a helical segment. At 86–90 (TLNEG) the chain is on the lumenal side. A helical transmembrane segment spans residues 91 to 109 (AWYSVGALIISVPALLGYL). At 110–187 (QEVCRAQLPE…NPVVSSQFYG (78 aa)) the chain is on the cytoplasmic side. An intramembrane region (helical) is located at residues 188–208 (ALLGMVCMLYLLPLCWVLALL). Over 209–404 (NSTLFLGNGE…CASCNQTLSK (196 aa)) the chain is Cytoplasmic. The tract at residues 259–299 (DSTPAPTPTEDLTPGSVEEAEEAEPDEEFKDAIEEDDEGTP) is disordered. Residues 271–354 (TPGSVEEAEE…GCAATFSVLK (84 aa)) are necessary for interaction with KIF5A. Positions 276 to 299 (EEAEEAEPDEEFKDAIEEDDEGTP) are enriched in acidic residues. The tract at residues 286–292 (EFKDAIE) is necessary for interaction with VAPA. The FYVE-type zinc-finger motif lies at 337–403 (TNNFGNCAGC…VCASCNQTLS (67 aa)). Zn(2+) contacts are provided by Cys343, Cys346, Cys359, Cys362, Cys367, Cys370, Cys395, and Cys398.

Can form homooligomers (monomers, dimers and tetramers). Interacts with FKBP8; may negatively regulate ZFYVE27 phosphorylation. Interacts with VAPA (via MSP domain); may regulate ZFYVE27 retention in the endoplasmic reticulum and its function in cell projections formation. Interacts with VAPB (via MSP domain). Interacts with RAB11A (GDP-bound form); regulates RAB11A. Interacts with RAB11B (GDP-bound form), REEP1, REEP5, ATL1, ATL2, ATL3, SPAST, SURF4, KIF5A, KIF5B, KIF5C and RTN3. In terms of processing, phosphorylated. Phosphorylation is induced by NGF through the MAPK/ERK pathway and modulates interaction with RAB11A.

The protein localises to the recycling endosome membrane. Its subcellular location is the endoplasmic reticulum membrane. It localises to the cell projection. The protein resides in the growth cone membrane. In terms of biological role, key regulator of RAB11-dependent vesicular trafficking during neurite extension through polarized membrane transport. Promotes axonal elongation and contributes to the establishment of neuronal cell polarity. Involved in nerve growth factor-induced neurite formation in VAPA-dependent manner. Contributes to both the formation and stabilization of the tubular ER network. Involved in ER morphogenesis by regulating the sheet-to-tubule balance and possibly the density of tubule interconnections. Acts as an adapter protein that facilitates the interaction of KIF5A with VAPA, VAPB, SURF4, RAB11A, RAB11B and RTN3 and the ZFYVE27-KIF5A complex contributes to the transport of these proteins in neurons. Can induce formation of neurite-like membrane protrusions in non-neuronal cells in a KIF5A/B-dependent manner. This Rattus norvegicus (Rat) protein is Protrudin (Zfyve27).